The sequence spans 273 residues: Undecaprenyl-diphosphatase (273 aa).

Helical transmembrane passes span 6–26 (SLLV…LPVS), 45–65 (AKTF…VMFW), 90–110 (LTLI…LLFH), 116–136 (LFNP…LIAA), 190–210 (YAAS…ATAL), 222–242 (GDIP…LVAI), and 252–272 (ISFI…YVVF).

Belongs to the UppP family.

It localises to the cell inner membrane. It carries out the reaction di-trans,octa-cis-undecaprenyl diphosphate + H2O = di-trans,octa-cis-undecaprenyl phosphate + phosphate + H(+). Catalyzes the dephosphorylation of undecaprenyl diphosphate (UPP). Confers resistance to bacitracin. This is Undecaprenyl-diphosphatase from Escherichia fergusonii (strain ATCC 35469 / DSM 13698 / CCUG 18766 / IAM 14443 / JCM 21226 / LMG 7866 / NBRC 102419 / NCTC 12128 / CDC 0568-73).